We begin with the raw amino-acid sequence, 66 residues long: Alpha-actitoxin-Ms11a-2 (66 aa).

The N-terminal stretch at 1–24 is a signal peptide; it reads MASKIFFVLAVFLVMSAVLPESFA. Intrachain disulfides connect Cys-26-Cys-41, Cys-33-Cys-46, and Cys-40-Cys-61.

It is found in the secreted. Its subcellular location is the nematocyst. Functionally, alpha-toxins act on postsynaptic membranes, they bind to the nicotinic acetylcholine receptors (nAChR) and thus inhibit them. This toxin competes with alpha-bungarotoxin for binding to orthosteric sites on muscle-type T.carlifornicus (IC(50)=1080 nM) and human alpha-7/CHRNA7 nAChRs (IC(50)=14.13 uM). The polypeptide is Alpha-actitoxin-Ms11a-2 (Metridium senile (Brown sea anemone)).